Consider the following 161-residue polypeptide: Urease accessory protein UreE (161 aa).

This sequence belongs to the UreE family. As to quaternary structure, homodimer.

The protein localises to the cytoplasm. Its function is as follows. Involved in urease metallocenter assembly. Binds nickel. Probably functions as a nickel donor during metallocenter assembly. It is not essential for urease activity. This is Urease accessory protein UreE from Proteus mirabilis (strain HI4320).